We begin with the raw amino-acid sequence, 214 residues long: Large ribosomal subunit protein uL18 (214 aa).

This sequence belongs to the universal ribosomal protein uL18 family. In terms of assembly, part of the 50S ribosomal subunit. Contacts the 5S and 23S rRNAs.

This is one of the proteins that bind and probably mediate the attachment of the 5S RNA into the large ribosomal subunit, where it forms part of the central protuberance. This Aeropyrum pernix (strain ATCC 700893 / DSM 11879 / JCM 9820 / NBRC 100138 / K1) protein is Large ribosomal subunit protein uL18.